The primary structure comprises 314 residues: Oxalate oxidoreductase subunit beta (314 aa).

[4Fe-4S] cluster is bound by residues Cys24, Cys27, Cys52, and Cys225.

In terms of assembly, dimer of heterotrimer of one alpha, one beta and one delta subunit. It depends on [4Fe-4S] cluster as a cofactor.

The catalysed reaction is oxidized 2[4Fe-4S]-[ferredoxin] + oxalate = reduced 2[4Fe-4S]-[ferredoxin] + 2 CO2. Functionally, catalyzes the anaerobic oxidation of oxalate using a broad range of electron acceptors, including ferredoxin and the nickel-dependent carbon monoxide dehydrogenase. Does not require coenzyme A as cosubstrate. Enables anaerobic growth on oxalate which is used as energy source by the bacteria. This chain is Oxalate oxidoreductase subunit beta, found in Moorella thermoacetica (strain ATCC 39073 / JCM 9320).